An 83-amino-acid polypeptide reads, in one-letter code: Toxin BmKBT (83 aa).

The N-terminal stretch at 1–19 is a signal peptide; sequence MKAALLLVIFSLMLIGVLT. The LCN-type CS-alpha/beta domain maps to 21-81; sequence KSGYPTDHEG…TWSRATNKCR (61 aa). Cystine bridges form between cysteine 31/cysteine 80, cysteine 35/cysteine 54, cysteine 41/cysteine 61, and cysteine 45/cysteine 63. Lysine 83 is a propeptide (removed by a carboxypeptidase).

It belongs to the long (4 C-C) scorpion toxin superfamily. Sodium channel inhibitor family. Beta subfamily. Expressed by the venom gland.

It localises to the secreted. Its function is as follows. This toxin increases the peak sodium current, slows down the inactivation of sodium channels (Nav), and prolongs the action potential of dorsal root ganglion neurons, which indicates that it behaves as a classical alpha-toxin. It binds to mammal brain and insect sodium channels, but with a different manner. This peptide may bind to a distinct receptor site on mammal brain sodium channels, which is unconnected with that for BmKAS (a beta-toxin), BmKIT2 (a beta-toxin) or BmK I (an alpha toxin). In contrast, the receptor site for BmKabT on insect sodium channels might be closely related to that for the beta-insect depressant toxin BmKIT2. Possesses potent toxicity in mice but induces only paralysis in cotton bollworm. The sequence is that of Toxin BmKBT from Olivierus martensii (Manchurian scorpion).